The sequence spans 618 residues: Serine/threonine-protein kinase TNNI3K (618 aa).

Gly-2 is lipidated: N-myristoyl glycine. The stretch at 21–51 (SESYVITIERLEDDLKIKEKELTELRNIFGS) forms a coiled coil. ANK repeat units follow at residues 66-96 (NGLS…RPSR), 100-129 (NGFT…DIQQ), 133-162 (GGLT…NVNI), 166-195 (VFFT…DVNV), 199-228 (VGDR…KADV), 234-263 (EDHV…EVQP), 269-298 (YGDT…TESL), 304-335 (FSET…NINH), 339-368 (DGHT…DMNL), and 381-410 (DEQT…PQDE). Residues 463–618 (IEFHEIIGSG…TAHTIYLLAP (156 aa)) enclose the Protein kinase domain. Residues 469–477 (IGSGSFGKV) and Lys-490 contribute to the ATP site. The active-site Proton acceptor is the Asp-588.

This sequence belongs to the protein kinase superfamily. TKL Ser/Thr protein kinase family. MAP kinase kinase kinase subfamily. Interacts with TNNI3, ACTC, ACTA1, MYBPC3, AIP, FABP3 and HADHB. The cofactor is Mg(2+). In terms of processing, autophosphorylated.

The protein resides in the nucleus. Its subcellular location is the cytoplasm. The enzyme catalyses L-seryl-[protein] + ATP = O-phospho-L-seryl-[protein] + ADP + H(+). The catalysed reaction is L-threonyl-[protein] + ATP = O-phospho-L-threonyl-[protein] + ADP + H(+). In terms of biological role, may play a role in cardiac physiology. The chain is Serine/threonine-protein kinase TNNI3K from Pongo abelii (Sumatran orangutan).